Reading from the N-terminus, the 232-residue chain is Orotate phosphoribosyltransferase (232 aa).

5-phospho-alpha-D-ribose 1-diphosphate-binding positions include R107, K108, K111, and E133–S141. T137 provides a ligand contact to orotate.

This sequence belongs to the purine/pyrimidine phosphoribosyltransferase family. PyrE subfamily. Homodimer. Mg(2+) is required as a cofactor.

It catalyses the reaction orotidine 5'-phosphate + diphosphate = orotate + 5-phospho-alpha-D-ribose 1-diphosphate. It functions in the pathway pyrimidine metabolism; UMP biosynthesis via de novo pathway; UMP from orotate: step 1/2. Its function is as follows. Catalyzes the transfer of a ribosyl phosphate group from 5-phosphoribose 1-diphosphate to orotate, leading to the formation of orotidine monophosphate (OMP). The protein is Orotate phosphoribosyltransferase of Cereibacter sphaeroides (strain ATCC 17025 / ATH 2.4.3) (Rhodobacter sphaeroides).